The following is a 291-amino-acid chain: Protease HtpX homolog (291 aa).

The next 2 membrane-spanning stretches (helical) occupy residues 11 to 31 and 34 to 54; these read INTFLILFVFILACGGFGLLA and FLGMSFFLFILLLAAGYACVQ. His140 contributes to the Zn(2+) binding site. The active site involves Glu141. Zn(2+) is bound at residue His144. 2 consecutive transmembrane segments (helical) span residues 155-175 and 186-206; these read IVFGLVSAVGLISDMVLRALI and AFSFVIVLFFSLLAPIAAMLV. Glu215 lines the Zn(2+) pocket.

This sequence belongs to the peptidase M48B family. Requires Zn(2+) as cofactor.

The protein resides in the cell membrane. This Tropheryma whipplei (strain Twist) (Whipple's bacillus) protein is Protease HtpX homolog.